Here is a 172-residue protein sequence, read N- to C-terminus: 3-hydroxydecanoyl-[acyl-carrier-protein] dehydratase (172 aa).

H71 is an active-site residue.

This sequence belongs to the thioester dehydratase family. FabA subfamily. As to quaternary structure, homodimer.

It is found in the cytoplasm. It carries out the reaction a (3R)-hydroxyacyl-[ACP] = a (2E)-enoyl-[ACP] + H2O. It catalyses the reaction (3R)-hydroxydecanoyl-[ACP] = (2E)-decenoyl-[ACP] + H2O. The catalysed reaction is (2E)-decenoyl-[ACP] = (3Z)-decenoyl-[ACP]. It participates in lipid metabolism; fatty acid biosynthesis. In terms of biological role, necessary for the introduction of cis unsaturation into fatty acids. Catalyzes the dehydration of (3R)-3-hydroxydecanoyl-ACP to E-(2)-decenoyl-ACP and then its isomerization to Z-(3)-decenoyl-ACP. Can catalyze the dehydratase reaction for beta-hydroxyacyl-ACPs with saturated chain lengths up to 16:0, being most active on intermediate chain length. The chain is 3-hydroxydecanoyl-[acyl-carrier-protein] dehydratase from Edwardsiella ictaluri (strain 93-146).